A 176-amino-acid chain; its full sequence is Membrane glycoprotein UL144 (176 aa).

The N-terminal stretch at 1–20 (MKPLVMLICFGVILLQLGVT) is a signal peptide. A TNFR-Cys repeat occupies 58-95 (PCPNGTYVSGLYNCTDCTQCNVTQVMIRNCTSTNNTVC). 3 disulfides stabilise this stretch: C59–C71, C74–C87, and C77–C95. The chain crosses the membrane as a helical span at residues 134–154 (LAWLSLFIFLVGIILLILYLI).

In terms of assembly, interacts with host TRIM23; this interaction causes auto-ubiquitination of TRAF6, leading to NF-kappaB activation.

It is found in the membrane. Its function is as follows. Activates NF-kappa-B in a tumor necrosis factor receptor (TNFR)-associated factor 6 (TRAF6)-dependent manner, causing the up-regulation of the chemokine CCL22. In Human cytomegalovirus (strain Merlin) (HHV-5), this protein is Membrane glycoprotein UL144 (UL144).